A 61-amino-acid chain; its full sequence is Cecropin-D (61 aa).

Residues 1 to 22 (MKFSKIFVFVFAIVFATASVSA) form the signal peptide. The propeptide at 23–24 (AP) is removed by a dipeptidylpeptidase. Glutamine 60 is subject to Glutamine amide.

Belongs to the cecropin family. As to expression, mainly in fat body. Lower in hemocytes. Not expressed in midguts, malpighian tubules and silk glands.

It is found in the secreted. Its function is as follows. Cecropins have lytic and antibacterial activity against several Gram-positive and Gram-negative bacteria. The sequence is that of Cecropin-D (CECD) from Bombyx mori (Silk moth).